Reading from the N-terminus, the 108-residue chain is Nucleoid-associated protein BTH_I2220 (108 aa).

This sequence belongs to the YbaB/EbfC family. In terms of assembly, homodimer.

It is found in the cytoplasm. The protein localises to the nucleoid. In terms of biological role, binds to DNA and alters its conformation. May be involved in regulation of gene expression, nucleoid organization and DNA protection. This is Nucleoid-associated protein BTH_I2220 from Burkholderia thailandensis (strain ATCC 700388 / DSM 13276 / CCUG 48851 / CIP 106301 / E264).